Here is a 796-residue protein sequence, read N- to C-terminus: Protocadherin beta-3 (796 aa).

The first 26 residues, 1-26 (MEAGGERFLRQRQVLLLFVFLGGSLA), serve as a signal peptide directing secretion. Residues 27-690 (GSESRRYSVA…AQADLLTVYL (664 aa)) lie on the Extracellular side of the membrane. Cadherin domains are found at residues 35–133 (VAEE…SPVF), 138–242 (MHLK…APEF), 247–347 (YEVA…PPEL), 352–451 (VNSP…APAF), and 456–561 (YTLF…SPFV). N-linked (GlcNAc...) asparagine glycosylation occurs at asparagine 169. 2 N-linked (GlcNAc...) asparagine glycosylation sites follow: asparagine 418 and asparagine 436. The N-linked (GlcNAc...) asparagine glycan is linked to asparagine 567. One can recognise a Cadherin 6 domain in the interval 568–671 (GSAPCTELVP…LVDGFSQPYL (104 aa)). Residues 691–711 (VVALASVSSLFLFSVLLFVAV) form a helical membrane-spanning segment. Over 712 to 796 (RLCRRSRAAS…PSFRKSFEFS (85 aa)) the chain is Cytoplasmic.

It is found in the cell membrane. Functionally, potential calcium-dependent cell-adhesion protein. May be involved in the establishment and maintenance of specific neuronal connections in the brain. In Pan troglodytes (Chimpanzee), this protein is Protocadherin beta-3 (PCDHB3).